The sequence spans 275 residues: 3-methyl-2-oxobutanoate hydroxymethyltransferase (275 aa).

Residues aspartate 49 and aspartate 88 each coordinate Mg(2+). 3-methyl-2-oxobutanoate contacts are provided by residues 49 to 50 (DS), aspartate 88, and lysine 118. Glutamate 120 lines the Mg(2+) pocket. Glutamate 187 (proton acceptor) is an active-site residue.

The protein belongs to the PanB family. Homodecamer; pentamer of dimers. Mg(2+) is required as a cofactor.

The protein resides in the cytoplasm. It catalyses the reaction 3-methyl-2-oxobutanoate + (6R)-5,10-methylene-5,6,7,8-tetrahydrofolate + H2O = 2-dehydropantoate + (6S)-5,6,7,8-tetrahydrofolate. It functions in the pathway cofactor biosynthesis; (R)-pantothenate biosynthesis; (R)-pantoate from 3-methyl-2-oxobutanoate: step 1/2. Catalyzes the reversible reaction in which hydroxymethyl group from 5,10-methylenetetrahydrofolate is transferred onto alpha-ketoisovalerate to form ketopantoate. The sequence is that of 3-methyl-2-oxobutanoate hydroxymethyltransferase from Brucella melitensis biotype 1 (strain ATCC 23456 / CCUG 17765 / NCTC 10094 / 16M).